Consider the following 411-residue polypeptide: 2,3-bisphosphoglycerate-independent phosphoglycerate mutase (411 aa).

It belongs to the BPG-independent phosphoglycerate mutase family. A-PGAM subfamily.

The catalysed reaction is (2R)-2-phosphoglycerate = (2R)-3-phosphoglycerate. The protein operates within carbohydrate degradation; glycolysis; pyruvate from D-glyceraldehyde 3-phosphate: step 3/5. Its function is as follows. Catalyzes the interconversion of 2-phosphoglycerate and 3-phosphoglycerate. This Pyrobaculum islandicum (strain DSM 4184 / JCM 9189 / GEO3) protein is 2,3-bisphosphoglycerate-independent phosphoglycerate mutase.